Here is a 215-residue protein sequence, read N- to C-terminus: CASP-like protein 1E1 (215 aa).

Topologically, residues 1 to 51 (MESSRGKPGLNGSGGGAAAFDYSSRRGYYTGAGAALPPLAAGSRAPPVDPC) are cytoplasmic. The chain crosses the membrane as a helical span at residues 52 to 72 (CVALRVFVLLGTLASAVVMAA). Topologically, residues 73 to 103 (DRQSTTVQIAAGEQLAPPLRVPVTAKWTYSS) are extracellular. A helical transmembrane segment spans residues 104-124 (AFVYFVVANAMVFAFSAAALA). At 125 to 130 (AVRRRS) the chain is on the cytoplasmic side. A helical transmembrane segment spans residues 131–151 (AVVPVMVGDLVAMALLFSAVG). At 152–185 (AAAQFGLLGERGNAHVRWAKVCDVYGPFCERAMA) the chain is on the extracellular side. Residues 186–206 (AVVVALIAAFADLVLLMLTIL) form a helical membrane-spanning segment. At 207–215 (TIHKASSYY) the chain is on the cytoplasmic side.

Belongs to the Casparian strip membrane proteins (CASP) family. Homodimer and heterodimers.

Its subcellular location is the cell membrane. This chain is CASP-like protein 1E1, found in Oryza sativa subsp. indica (Rice).